A 286-amino-acid chain; its full sequence is Bifunctional protein FolD (286 aa).

Residues 165–167 (GRS) and serine 190 each bind NADP(+).

The protein belongs to the tetrahydrofolate dehydrogenase/cyclohydrolase family. As to quaternary structure, homodimer.

It carries out the reaction (6R)-5,10-methylene-5,6,7,8-tetrahydrofolate + NADP(+) = (6R)-5,10-methenyltetrahydrofolate + NADPH. The enzyme catalyses (6R)-5,10-methenyltetrahydrofolate + H2O = (6R)-10-formyltetrahydrofolate + H(+). The protein operates within one-carbon metabolism; tetrahydrofolate interconversion. Its function is as follows. Catalyzes the oxidation of 5,10-methylenetetrahydrofolate to 5,10-methenyltetrahydrofolate and then the hydrolysis of 5,10-methenyltetrahydrofolate to 10-formyltetrahydrofolate. The protein is Bifunctional protein FolD of Staphylococcus aureus (strain bovine RF122 / ET3-1).